The following is a 408-amino-acid chain: Bone morphogenetic protein 4 (408 aa).

An N-terminal signal peptide occupies residues 1–19 (MIPGNRMLMVVLLCQVLLG). Residues 20 to 292 (GATDASLIPE…HTLTRRRAKR (273 aa)) constitute a propeptide that is removed on maturation. Phosphoserine is present on Ser91. The disordered stretch occupies residues 91 to 113 (SGEEEEEEQSQGTGLEYPERPAS). 2 N-linked (GlcNAc...) asparagine glycosylation sites follow: Asn144 and Asn209. The tract at residues 281-307 (RGHTLTRRRAKRSPKHHPQRSRKKNKN) is disordered. Basic residues predominate over residues 284–307 (TLTRRRAKRSPKHHPQRSRKKNKN). Intrachain disulfides connect Cys308/Cys373, Cys337/Cys405, and Cys341/Cys407. Residues Asn350 and Asn365 are each glycosylated (N-linked (GlcNAc...) asparagine).

Belongs to the TGF-beta family. In terms of assembly, homodimer; disulfide-linked. Interacts with GREM2. Part of a complex consisting of TWSG1 and CHRD. Interacts with the serine proteases, HTRA1 and HTRA3; the interaction with either inhibits BMP4-mediated signaling. The HTRA protease activity is required for this inhibition. Interacts with SOSTDC1. Interacts with FBN1 (via N-terminal domain) and FBN2. Interacts with type I receptor BMPR1A. Interacts with type II receptor BMPR2. Interacts with FSTL1; this interaction inhibits the activation of the BMP4/Smad1/5/8 signaling pathway. Interacts with SCUBE3. Interacts with TGFBR3.

The protein localises to the secreted. The protein resides in the extracellular space. Its subcellular location is the extracellular matrix. Growth factor of the TGF-beta superfamily that plays essential roles in many developmental processes, including neurogenesis, vascular development, angiogenesis and osteogenesis. Acts in concert with PTHLH/PTHRP to stimulate ductal outgrowth during embryonic mammary development and to inhibit hair follicle induction. Initiates the canonical BMP signaling cascade by associating with type I receptor BMPR1A and type II receptor BMPR2. Once all three components are bound together in a complex at the cell surface, BMPR2 phosphorylates and activates BMPR1A. In turn, BMPR1A propagates signal by phosphorylating SMAD1/5/8 that travel to the nucleus and act as activators and repressors of transcription of target genes. Positively regulates the expression of odontogenic development regulator MSX1 via inducing the IPO7-mediated import of SMAD1 to the nucleus. Required for MSX1-mediated mesenchymal molar tooth bud development beyond the bud stage, via promoting Wnt signaling. Acts as a positive regulator of odontoblast differentiation during mesenchymal tooth germ formation, expression is repressed during the bell stage by MSX1-mediated inhibition of CTNNB1 signaling. Able to induce its own expression in dental mesenchymal cells and also in the neighboring dental epithelial cells via an MSX1-mediated pathway. Can also signal through non-canonical BMP pathways such as ERK/MAP kinase, PI3K/Akt, or SRC cascades. For example, induces SRC phosphorylation which, in turn, activates VEGFR2, leading to an angiogenic response. The chain is Bone morphogenetic protein 4 from Rattus norvegicus (Rat).